A 301-amino-acid chain; its full sequence is Acetyl-coenzyme A carboxylase carboxyl transferase subunit beta (301 aa).

The CoA carboxyltransferase N-terminal domain maps to 23–292 (VWTKCDSCGQ…PSPDEPRESV (270 aa)). Zn(2+) contacts are provided by C27, C30, C46, and C49. The C4-type zinc-finger motif lies at 27-49 (CDSCGQVLYRAELERNLEVCPKC). The interval 280–301 (LPAPSPDEPRESVVVPDQEPEA) is disordered.

This sequence belongs to the AccD/PCCB family. In terms of assembly, acetyl-CoA carboxylase is a heterohexamer composed of biotin carboxyl carrier protein (AccB), biotin carboxylase (AccC) and two subunits each of ACCase subunit alpha (AccA) and ACCase subunit beta (AccD). Requires Zn(2+) as cofactor.

The protein resides in the cytoplasm. It carries out the reaction N(6)-carboxybiotinyl-L-lysyl-[protein] + acetyl-CoA = N(6)-biotinyl-L-lysyl-[protein] + malonyl-CoA. The protein operates within lipid metabolism; malonyl-CoA biosynthesis; malonyl-CoA from acetyl-CoA: step 1/1. Its function is as follows. Component of the acetyl coenzyme A carboxylase (ACC) complex. Biotin carboxylase (BC) catalyzes the carboxylation of biotin on its carrier protein (BCCP) and then the CO(2) group is transferred by the transcarboxylase to acetyl-CoA to form malonyl-CoA. The sequence is that of Acetyl-coenzyme A carboxylase carboxyl transferase subunit beta from Enterobacter sp. (strain 638).